The primary structure comprises 549 residues: Probable protein kinase UbiB (549 aa).

The 379-residue stretch at 123–501 folds into the Protein kinase domain; the sequence is DFNDTPLASA…QQKSHKSNYL (379 aa). Residues 129 to 137 and Lys-152 each bind ATP; that span reads LASASISQV. Asp-287 acts as the Proton acceptor in catalysis. Helical transmembrane passes span 498–518 and 519–539; these read SNYLLITSAVLLICGTILFTQ and IVTLWPAYTCIGAGILIWAIG.

Belongs to the ABC1 family. UbiB subfamily.

The protein localises to the cell inner membrane. Its pathway is cofactor biosynthesis; ubiquinone biosynthesis [regulation]. In terms of biological role, is probably a protein kinase regulator of UbiI activity which is involved in aerobic coenzyme Q (ubiquinone) biosynthesis. This Shewanella frigidimarina (strain NCIMB 400) protein is Probable protein kinase UbiB.